The chain runs to 545 residues: Ribulokinase (545 aa).

Belongs to the ribulokinase family.

It catalyses the reaction D-ribulose + ATP = D-ribulose 5-phosphate + ADP + H(+). The catalysed reaction is L-ribulose + ATP = L-ribulose 5-phosphate + ADP + H(+). It participates in carbohydrate degradation; L-arabinose degradation via L-ribulose; D-xylulose 5-phosphate from L-arabinose (bacterial route): step 2/3. This chain is Ribulokinase, found in Staphylococcus aureus (strain bovine RF122 / ET3-1).